A 347-amino-acid polypeptide reads, in one-letter code: Phosphate acyltransferase (347 aa).

It belongs to the PlsX family. Homodimer. Probably interacts with PlsY.

It is found in the cytoplasm. It carries out the reaction a fatty acyl-[ACP] + phosphate = an acyl phosphate + holo-[ACP]. It participates in lipid metabolism; phospholipid metabolism. Functionally, catalyzes the reversible formation of acyl-phosphate (acyl-PO(4)) from acyl-[acyl-carrier-protein] (acyl-ACP). This enzyme utilizes acyl-ACP as fatty acyl donor, but not acyl-CoA. This chain is Phosphate acyltransferase, found in Dehalococcoides mccartyi (strain ATCC BAA-2100 / JCM 16839 / KCTC 5957 / BAV1).